The sequence spans 247 residues: Cell division protein ZapD (247 aa).

The protein belongs to the ZapD family. In terms of assembly, interacts with FtsZ.

Its subcellular location is the cytoplasm. In terms of biological role, cell division factor that enhances FtsZ-ring assembly. Directly interacts with FtsZ and promotes bundling of FtsZ protofilaments, with a reduction in FtsZ GTPase activity. The chain is Cell division protein ZapD from Shigella dysenteriae serotype 1 (strain Sd197).